We begin with the raw amino-acid sequence, 210 residues long: Small ribosomal subunit protein uS4 (210 aa).

Residues 99–161 (RRLDSVIYRM…SKNNATILSA (63 aa)) enclose the S4 RNA-binding domain.

It belongs to the universal ribosomal protein uS4 family. As to quaternary structure, part of the 30S ribosomal subunit. Contacts protein S5. The interaction surface between S4 and S5 is involved in control of translational fidelity.

One of the primary rRNA binding proteins, it binds directly to 16S rRNA where it nucleates assembly of the body of the 30S subunit. Its function is as follows. With S5 and S12 plays an important role in translational accuracy. The sequence is that of Small ribosomal subunit protein uS4 from Solibacter usitatus (strain Ellin6076).